A 967-amino-acid chain; its full sequence is Putative helicase MOV-10 (967 aa).

A disordered region spans residues 85–117 (ADQYRRPRTDTEVSAPAPGQQPSSGPPAPQSRA). The segment covering 98–107 (SAPAPGQQPS) has biased composition (low complexity). 516–523 (GPPGTGKT) provides a ligand contact to ATP. Residues 638 to 641 (DECG) carry the DEAG box motif.

Belongs to the DNA2/NAM7 helicase family. SDE3 subfamily.

It is found in the cytoplasm. The protein localises to the P-body. Its subcellular location is the cytoplasmic ribonucleoprotein granule. The protein resides in the stress granule. It localises to the nucleus. It catalyses the reaction ATP + H2O = ADP + phosphate + H(+). Functionally, 5' to 3' RNA helicase that is involved in a number of cellular roles ranging from mRNA metabolism and translation, modulation of viral infectivity, inhibition of retrotransposition, or regulation of synaptic transmission. Plays an important role in innate antiviral immunity by promoting type I interferon production. Required for microRNA (miRNA)-mediated gene silencing by the RNA-induced silencing complex (RISC). Required for both miRNA-mediated translational repression and miRNA-mediated cleavage of complementary mRNAs by RISC. In cooperation with FMR1, regulates miRNA-mediated translational repression by AGO2. Restricts retrotransposition of long interspersed element-1 (LINE-1). Required for embryonic viability and for normal central nervous system development and function. May function as a messenger ribonucleoprotein (mRNP) clearance factor. The chain is Putative helicase MOV-10 (MOV10) from Gallus gallus (Chicken).